A 122-amino-acid polypeptide reads, in one-letter code: Small ribosomal subunit protein uS12 (122 aa).

It belongs to the universal ribosomal protein uS12 family. Part of the 30S ribosomal subunit. Contacts proteins S8 and S17. May interact with IF1 in the 30S initiation complex.

In terms of biological role, with S4 and S5 plays an important role in translational accuracy. Its function is as follows. Interacts with and stabilizes bases of the 16S rRNA that are involved in tRNA selection in the A site and with the mRNA backbone. Located at the interface of the 30S and 50S subunits, it traverses the body of the 30S subunit contacting proteins on the other side and probably holding the rRNA structure together. The combined cluster of proteins S8, S12 and S17 appears to hold together the shoulder and platform of the 30S subunit. This chain is Small ribosomal subunit protein uS12, found in Corynebacterium efficiens (strain DSM 44549 / YS-314 / AJ 12310 / JCM 11189 / NBRC 100395).